The chain runs to 448 residues: Argininosuccinate synthase (448 aa).

ATP contacts are provided by residues 17–25 (AFSGGLDTS) and A43. L-citrulline is bound at residue Y99. ATP-binding residues include G129 and T131. 3 residues coordinate L-aspartate: T131, N135, and D136. N135 is an L-citrulline binding site. An ATP-binding site is contributed by D136. The L-citrulline site is built by R139 and S192. ATP is bound at residue D194. L-citrulline is bound by residues T201, E203, and E280.

It belongs to the argininosuccinate synthase family. Type 2 subfamily. As to quaternary structure, homotetramer.

The protein resides in the cytoplasm. The enzyme catalyses L-citrulline + L-aspartate + ATP = 2-(N(omega)-L-arginino)succinate + AMP + diphosphate + H(+). It participates in amino-acid biosynthesis; L-arginine biosynthesis; L-arginine from L-ornithine and carbamoyl phosphate: step 2/3. The polypeptide is Argininosuccinate synthase (Pectobacterium carotovorum subsp. carotovorum (strain PC1)).